The primary structure comprises 419 residues: L-rhamnose isomerase (419 aa).

Mn(2+) contacts are provided by His-262, Asp-294, and Asp-296.

Belongs to the rhamnose isomerase family. As to quaternary structure, homotetramer. Mn(2+) serves as cofactor.

It localises to the cytoplasm. The catalysed reaction is L-rhamnopyranose = L-rhamnulose. It participates in carbohydrate degradation; L-rhamnose degradation; glycerone phosphate from L-rhamnose: step 1/3. In terms of biological role, catalyzes the interconversion of L-rhamnose and L-rhamnulose. This Escherichia coli O81 (strain ED1a) protein is L-rhamnose isomerase.